The primary structure comprises 948 residues: Autophagy-related protein 9 (948 aa).

Disordered stretches follow at residues 1 to 20 (MMSS…PSVY), 46 to 104 (QQEQ…PRWM), and 130 to 193 (HHED…TGQH). Topologically, residues 1-230 (MMSSNILSRF…DVYVYFLGNG (230 aa)) are cytoplasmic. Over residues 66–79 (EIVSPSTALLNQAR) the composition is skewed to polar residues. Basic and acidic residues predominate over residues 163-172 (TEARWNERGV). A helical transmembrane segment spans residues 231 to 251 (IWSILLTRVLNLLTFAFVVGF). The Lumenal portion of the chain corresponds to 252–287 (STFLTNCIDYPKVRRSKTLNDILVPQCTANMSGSST). Residues 288–308 (FLLWLFSFFWIGKLFQYLLDI) traverse the membrane as a helical segment. Residues 309-454 (RRLKHLHDFY…RALSDGLRRR (146 aa)) are Cytoplasmic-facing. Residues 455-475 (FIFAGVMNIFVAPFIVVYFMM) lie within the membrane without spanning it. At 476–543 (HYFFRYFNEF…PKDKTVQVAR (68 aa)) the chain is on the cytoplasmic side. Residues 544–564 (FVAFISGALASVLALASVIDP) form a helical membrane-spanning segment. Residues 565-576 (ELFLGFEITHDR) are Lumenal-facing. A helical transmembrane segment spans residues 577 to 597 (TVLFYLGIFGTVWAFARGLAP). At 598–643 (EETDVFDPEYALLELIDFTHYFPSGWKGRLHSDDVRKEFAILYQMK) the chain is on the cytoplasmic side. An intramembrane segment occupies 644 to 664 (IVIFLEEILSMIFTPFVLWFS). Residues 665–948 (LPKCSDRLID…TEGRRTNVGI (284 aa)) are Cytoplasmic-facing. The tract at residues 762-923 (TLGSPTAGGF…EGENIDAIAG (162 aa)) is disordered. Residues 844–853 (QRSRLGRSHH) are compositionally biased toward basic residues. The segment covering 878–892 (SGARTGTSSAGAGTS) has biased composition (low complexity). Acidic residues predominate over residues 907 to 917 (NDEDEGDEGEN).

The protein belongs to the ATG9 family. As to quaternary structure, homotrimer; forms a homotrimer with a central pore that forms a path between the two membrane leaflets. Phosphorylated by atg1. Atg1 phosphorylation is required for preautophagosome elongation.

The protein resides in the preautophagosomal structure membrane. It localises to the cytoplasmic vesicle membrane. Its subcellular location is the golgi apparatus membrane. It is found in the endoplasmic reticulum membrane. The catalysed reaction is a 1,2-diacyl-sn-glycero-3-phosphocholine(in) = a 1,2-diacyl-sn-glycero-3-phosphocholine(out). It catalyses the reaction a 1,2-diacyl-sn-glycero-3-phospho-L-serine(in) = a 1,2-diacyl-sn-glycero-3-phospho-L-serine(out). It carries out the reaction a 1,2-diacyl-sn-glycero-3-phosphoethanolamine(in) = a 1,2-diacyl-sn-glycero-3-phosphoethanolamine(out). The enzyme catalyses a 1,2-diacyl-sn-glycero-3-phospho-(1D-myo-inositol-3-phosphate)(in) = a 1,2-diacyl-sn-glycero-3-phospho-(1D-myo-inositol-3-phosphate)(out). In terms of biological role, phospholipid scramblase involved in autophagy and cytoplasm to vacuole transport (Cvt) vesicle formation. Cycles between the preautophagosomal structure/phagophore assembly site (PAS) and the cytoplasmic vesicle pool and supplies membrane for the growing autophagosome. Lipid scramblase activity plays a key role in preautophagosomal structure/phagophore assembly by distributing the phospholipids that arrive through atg2 from the cytoplasmic to the luminal leaflet of the bilayer, thereby driving autophagosomal membrane expansion. Required for mitophagy. Also involved in endoplasmic reticulum-specific autophagic process and is essential for the survival of cells subjected to severe ER stress. Different machineries are required for anterograde trafficking to the PAS during either the Cvt pathway or bulk autophagy and for retrograde trafficking. This Penicillium rubens (strain ATCC 28089 / DSM 1075 / NRRL 1951 / Wisconsin 54-1255) (Penicillium chrysogenum) protein is Autophagy-related protein 9 (atg9).